The primary structure comprises 205 residues: Putative 3-methyladenine DNA glycosylase (205 aa).

Belongs to the DNA glycosylase MPG family.

This is Putative 3-methyladenine DNA glycosylase from Clostridium perfringens (strain 13 / Type A).